The following is a 331-amino-acid chain: UPF0194 membrane protein CKO_02332 (331 aa).

The first 15 residues, 1–15 (MKKPVVIALAVAALA), serve as a signal peptide directing secretion. A coiled-coil region spans residues 142-207 (ISANDLENAR…ELDLQDTTLI (66 aa)).

Belongs to the UPF0194 family.

The protein localises to the periplasm. The protein is UPF0194 membrane protein CKO_02332 of Citrobacter koseri (strain ATCC BAA-895 / CDC 4225-83 / SGSC4696).